The following is a 210-amino-acid chain: Large ribosomal subunit protein uL4 (210 aa).

Over residues 41–51 (ANARQGTQSTK) the composition is skewed to polar residues. 2 disordered regions span residues 41–60 (ANAR…QGSS) and 67–98 (KGTG…DFSK).

The protein belongs to the universal ribosomal protein uL4 family. Part of the 50S ribosomal subunit.

Its function is as follows. One of the primary rRNA binding proteins, this protein initially binds near the 5'-end of the 23S rRNA. It is important during the early stages of 50S assembly. It makes multiple contacts with different domains of the 23S rRNA in the assembled 50S subunit and ribosome. Forms part of the polypeptide exit tunnel. This Dehalococcoides mccartyi (strain ATCC BAA-2266 / KCTC 15142 / 195) (Dehalococcoides ethenogenes (strain 195)) protein is Large ribosomal subunit protein uL4.